The sequence spans 227 residues: MVSIKSVLAAATAVSSALAAPFDFVPRDNSTALQARQVTPNAEGWHNGYFYSWWSDGGGQVQYTNLEGSRYQVRWRNTGNFVGGKGWNPGTGRTINYGGYFNPQGNGYLAVYGWTRNPLVEYYVIESYGTYNPGSQAQYKGTFYTDGDQYDIFVSTRYNQPSIDGTRTFQQYWSIRKNKRVGGSVNMQNHFNAWQQHGMPLGQHYYQIVATEGYQSSGESDIYVQTH.

The signal sequence occupies residues 1–36 (MVSIKSVLAAATAVSSALAAPFDFVPRDNSTALQAR). The N-linked (GlcNAc...) asparagine glycan is linked to N29. A GH11 domain is found at 37 to 225 (QVTPNAEGWH…SSGESDIYVQ (189 aa)). E121 (nucleophile) is an active-site residue. E212 acts as the Proton donor in catalysis.

It belongs to the glycosyl hydrolase 11 (cellulase G) family.

The protein resides in the secreted. The enzyme catalyses Endohydrolysis of (1-&gt;4)-beta-D-xylosidic linkages in xylans.. Its pathway is glycan degradation; xylan degradation. Functionally, endo-1,4-beta-xylanase involved in the hydrolysis of xylan, a major structural heterogeneous polysaccharide found in plant biomass representing the second most abundant polysaccharide in the biosphere, after cellulose. This chain is Endo-1,4-beta-xylanase 2 (xyn2), found in Humicola insolens (Soft-rot fungus).